Consider the following 1388-residue polypeptide: DNA-directed RNA polymerase subunit beta' (1388 aa).

Zn(2+)-binding residues include C76, C78, C91, and C94. Mg(2+)-binding residues include D467, D469, and D471. Residues C810, C884, C891, and C894 each coordinate Zn(2+).

Belongs to the RNA polymerase beta' chain family. In terms of assembly, the RNAP catalytic core consists of 2 alpha, 1 beta, 1 beta' and 1 omega subunit. When a sigma factor is associated with the core the holoenzyme is formed, which can initiate transcription. The cofactor is Mg(2+). Zn(2+) is required as a cofactor.

It carries out the reaction RNA(n) + a ribonucleoside 5'-triphosphate = RNA(n+1) + diphosphate. In terms of biological role, DNA-dependent RNA polymerase catalyzes the transcription of DNA into RNA using the four ribonucleoside triphosphates as substrates. This Lawsonia intracellularis (strain PHE/MN1-00) protein is DNA-directed RNA polymerase subunit beta'.